The following is a 136-amino-acid chain: Large ribosomal subunit protein uL16 (136 aa).

This sequence belongs to the universal ribosomal protein uL16 family. Part of the 50S ribosomal subunit.

Its function is as follows. Binds 23S rRNA and is also seen to make contacts with the A and possibly P site tRNAs. The protein is Large ribosomal subunit protein uL16 of Vesicomyosocius okutanii subsp. Calyptogena okutanii (strain HA).